A 621-amino-acid polypeptide reads, in one-letter code: Zinc metalloproteinase-disintegrin-like TSV-DM (621 aa).

The first 20 residues, 1–20, serve as a signal peptide directing secretion; that stretch reads MIQVLLVTICLAVFPYQGSS. The propeptide occupies 21–191; the sequence is IILESGNVND…EASQSNLTPE (171 aa). Gln-192 carries the post-translational modification Pyrrolidone carboxylic acid. One can recognise a Peptidase M12B domain in the interval 200-396; the sequence is KYVKFFLVAD…NMPQCILKKP (197 aa). Residue Asn-219 is glycosylated (N-linked (GlcNAc...) asparagine). 3 cysteine pairs are disulfide-bonded: Cys-311/Cys-391, Cys-351/Cys-375, and Cys-353/Cys-358. Zn(2+) is bound at residue His-336. The active site involves Glu-337. Zn(2+)-binding residues include His-340 and His-346. Residues 404 to 489 enclose the Disintegrin domain; that stretch reads PPVCGNYFVE…AECTDRFQRN (86 aa). The Ca(2+) site is built by Val-406, Asn-409, Phe-411, Glu-413, Glu-416, and Asp-419. 14 disulfides stabilise this stretch: Cys-407–Cys-436, Cys-418–Cys-431, Cys-420–Cys-426, Cys-430–Cys-453, Cys-444–Cys-450, Cys-449–Cys-475, Cys-462–Cys-482, Cys-469–Cys-500, Cys-493–Cys-505, Cys-512–Cys-562, Cys-527–Cys-573, Cys-540–Cys-550, Cys-557–Cys-599, and Cys-593–Cys-605. The D/ECD-tripeptide signature appears at 468-470; sequence ECD. Residues Asp-470, Met-471, Asp-473, Asp-484, and Arg-485 each contribute to the Ca(2+) site. An N-linked (GlcNAc...) asparagine glycan is attached at Asn-502.

Belongs to the venom metalloproteinase (M12B) family. P-III subfamily. P-IIIc sub-subfamily. Homodimer; disulfide-linked. Zn(2+) is required as a cofactor. The N-terminus is blocked. In terms of tissue distribution, expressed by the venom gland.

It localises to the secreted. With respect to regulation, inhibited by EDTA and DTT, and partially inhibited by EGTA, but not inhibited by PMSF and NEM. Its function is as follows. Snake venom zinc metalloprotease that hydrolyzes the alpha-chain (FGA) and more slowly the beta-chain (FGB) of fibrinogen. Inhibits cell proliferation and induces cell morphologic changes transiently on human umbilical vein endothelial cells. This is Zinc metalloproteinase-disintegrin-like TSV-DM from Trimeresurus stejnegeri (Chinese green tree viper).